The primary structure comprises 391 residues: Tumor susceptibility gene 101 protein (391 aa).

An N-acetylalanine modification is found at alanine 2. One can recognise a UEV domain in the interval 2–145 (AVSESQLKKM…GEEPPVFSRP (144 aa)). An interaction with CEP55 region spans residues 159 to 163 (PPNTS). The tract at residues 197–220 (YPATTSSQYPSQPPVTTVGPSRDG) is disordered. Positions 200–215 (TTSSQYPSQPPVTTVG) are enriched in polar residues. Position 221 is a phosphothreonine (threonine 221). The stretch at 237 to 317 (DKLRWRMKEE…NQSENNDIDE (81 aa)) forms a coiled coil. A PTAP/PSAP motif motif is present at residues 321 to 324 (PTAP). Positions 323–391 (APLYKQILNL…RKTAGLSDLY (69 aa)) constitute an SB domain.

The protein belongs to the ubiquitin-conjugating enzyme family. UEV subfamily. As to quaternary structure, component of the ESCRT-I complex (endosomal sorting complex required for transport I) which consists of TSG101, VPS28, a VPS37 protein (VPS37A to -D) and MVB12A or MVB12B in a 1:1:1:1 stoichiometry. Interacts with VPS37A, VPS37B and VPS37C. Component of an ESCRT-I complex (endosomal sorting complex required for transport I) which consists of TSG101, VPS28, VPS37A and UBAP1 in a 1:1:1:1 stoichiometry. Interacts with DMAP1. Interacts with GMCL. Interacts with ubiquitin, stathmin and AATF. Interacts with HGS; the interaction mediates the association with the ESCRT-0 complex. Interacts with GGA1 and GGA3. Interacts (via UEV domain) with PDCD6IP/AIP1. Interacts with VPS28, SNF8 and VPS36. Self-associates. Interacts with MVB12A; the association appears to be mediated by the TSG101-VPS37 binary subcomplex. Interacts with VPS37D. Interacts with LRSAM1. Interacts with CEP55; the interaction is required for cytokinesis. Interacts with PDCD6. Interacts with LITAF. Interacts with murine leukemia virus Gag polyprotein (via PSAP motif). Interacts with MGRN1. Interacts with ARRDC1; recruits TSG101 to the plasma membrane. Monoubiquitinated at multiple sites by LRSAM1 and by MGRN1. Ubiquitination inactivates it, possibly by regulating its shuttling between an active membrane-bound protein and an inactive soluble form. Ubiquitination by MGRN1 requires the presence of UBE2D1. As to expression, ubiquitous. Higher expression in brain and mammary gland. Lower expression in liver and tumoral tissues.

Its subcellular location is the cytoplasm. It is found in the early endosome membrane. The protein resides in the late endosome membrane. It localises to the cytoskeleton. The protein localises to the microtubule organizing center. Its subcellular location is the centrosome. It is found in the midbody. The protein resides in the midbody ring. It localises to the nucleus. Component of the ESCRT-I complex, a regulator of vesicular trafficking process. Binds to ubiquitinated cargo proteins and is required for the sorting of endocytic ubiquitinated cargos into multivesicular bodies (MVBs). Mediates the association between the ESCRT-0 and ESCRT-I complex. Required for completion of cytokinesis; the function requires CEP55. May be involved in cell growth and differentiation. Acts as a negative growth regulator. Required for the exosomal release of SDCBP, CD63 and syndecan. It may also play a role in the extracellular release of microvesicles that differ from the exosomes. This is Tumor susceptibility gene 101 protein (Tsg101) from Mus musculus (Mouse).